Consider the following 314-residue polypeptide: Pantothenate synthetase (314 aa).

ATP is bound at residue 43–50 (MGALHEGH). Catalysis depends on His50, which acts as the Proton donor. Gln75 is a binding site for (R)-pantoate. Gln75 is a beta-alanine binding site. Residues 112–131 (MYPDGTRTSVHPGPLGDDLE) form a disordered region. 161–164 (GEKD) contacts ATP. Gln167 contributes to the (R)-pantoate binding site. ATP contacts are provided by residues Val190 and 198–201 (LSSR).

It belongs to the pantothenate synthetase family. In terms of assembly, homodimer.

The protein resides in the cytoplasm. It catalyses the reaction (R)-pantoate + beta-alanine + ATP = (R)-pantothenate + AMP + diphosphate + H(+). The protein operates within cofactor biosynthesis; (R)-pantothenate biosynthesis; (R)-pantothenate from (R)-pantoate and beta-alanine: step 1/1. Functionally, catalyzes the condensation of pantoate with beta-alanine in an ATP-dependent reaction via a pantoyl-adenylate intermediate. The chain is Pantothenate synthetase from Mycolicibacterium smegmatis (strain ATCC 700084 / mc(2)155) (Mycobacterium smegmatis).